The primary structure comprises 251 residues: Small ribosomal subunit protein uS2 (251 aa).

Belongs to the universal ribosomal protein uS2 family.

This is Small ribosomal subunit protein uS2 from Nitrosomonas europaea (strain ATCC 19718 / CIP 103999 / KCTC 2705 / NBRC 14298).